A 337-amino-acid polypeptide reads, in one-letter code: Monoacylglycerol lipase ABHD6 (337 aa).

Residues 1 to 8 lie on the Extracellular side of the membrane; sequence MDLDVVNM. Residues 9–29 traverse the membrane as a helical; Signal-anchor for type II membrane protein segment; that stretch reads FVIAGGTLAIPILAFVASFLL. At 30 to 337 the chain is on the cytoplasmic side; that stretch reads WPSALIRIYY…HNPDNNKKLN (308 aa). The Nucleophile role is filled by Ser148. Active-site charge relay system residues include Asp278 and His306.

It belongs to the AB hydrolase superfamily.

Its subcellular location is the late endosome membrane. It localises to the lysosome membrane. The protein resides in the mitochondrion membrane. It catalyses the reaction Hydrolyzes glycerol monoesters of long-chain fatty acids.. The catalysed reaction is 1-octanoylglycerol + H2O = octanoate + glycerol + H(+). The enzyme catalyses 1-decanoylglycerol + H2O = decanoate + glycerol + H(+). It carries out the reaction 1-dodecanoylglycerol + H2O = dodecanoate + glycerol + H(+). It catalyses the reaction 1-tetradecanoylglycerol + H2O = tetradecanoate + glycerol + H(+). The catalysed reaction is 2-hexadecanoylglycerol + H2O = glycerol + hexadecanoate + H(+). The enzyme catalyses 2-(9Z-octadecenoyl)-glycerol + H2O = glycerol + (9Z)-octadecenoate + H(+). It carries out the reaction 1-(9Z-octadecenoyl)-glycerol + H2O = glycerol + (9Z)-octadecenoate + H(+). It catalyses the reaction 2-(9Z,12Z-octadecadienoyl)-glycerol + H2O = (9Z,12Z)-octadecadienoate + glycerol + H(+). The catalysed reaction is 2-(5Z,8Z,11Z,14Z-eicosatetraenoyl)-glycerol + H2O = glycerol + (5Z,8Z,11Z,14Z)-eicosatetraenoate + H(+). The enzyme catalyses 1-(5Z,8Z,11Z,14Z-eicosatetraenoyl)-glycerol + H2O = glycerol + (5Z,8Z,11Z,14Z)-eicosatetraenoate + H(+). It carries out the reaction 1-(9Z,12Z-octadecadienoyl)-glycerol + H2O = (9Z,12Z)-octadecadienoate + glycerol + H(+). It catalyses the reaction 3-(9Z-octadecenoyl)-sn-glycero-1-phospho-(3'-(9Z-octadecenoyl)-1'-sn-glycerol) + H2O = 3-(9Z-octadecenoyl)-sn-glycero-1-phospho-(1'-sn-glycerol) + (9Z)-octadecenoate + H(+). The catalysed reaction is (S,S)-2-(9Z-octadecenoyl)-sn-glycero-1-phospho-(2'-(9Z-octadecenoyl)-1'-sn-glycerol) + H2O = (S,S)-2-(9Z-octadecenoyl)-sn-glycero-1-phospho-(1'-sn-glycerol) + (9Z)-octadecenoate + H(+). The enzyme catalyses (R,R)-2-(9Z-octadecenoyl)-sn-glycero-3-phospho-(2'-(9Z-octadecenoyl)-3'-sn-glycerol) + H2O = (R,R)-2-(9Z-octadecenoyl)-sn-glycero-3-phospho-(3'-sn-glycerol) + (9Z)-octadecenoate + H(+). Its function is as follows. Lipase that preferentially hydrolysis medium-chain saturated monoacylglycerols including 2-arachidonoylglycerol. Through 2-arachidonoylglycerol degradation may regulate endocannabinoid signaling pathways. Also has a lysophosphatidyl lipase activity with a preference for lysophosphatidylglycerol among other lysophospholipids. Also able to degrade bis(monoacylglycero)phosphate (BMP) and constitutes the major enzyme for BMP catabolism. BMP, also known as lysobisphosphatidic acid, is enriched in late endosomes and lysosomes and plays a key role in the formation of intraluminal vesicles and in lipid sorting. This Rattus norvegicus (Rat) protein is Monoacylglycerol lipase ABHD6.